The chain runs to 198 residues: ATP synthase subunit b (198 aa).

The helical transmembrane segment at 49 to 67 (IWKWANFLILAGGLGYLVG) threads the bilayer.

Belongs to the ATPase B chain family. As to quaternary structure, F-type ATPases have 2 components, F(1) - the catalytic core - and F(0) - the membrane proton channel. F(1) has five subunits: alpha(3), beta(3), gamma(1), delta(1), epsilon(1). F(0) has three main subunits: a(1), b(2) and c(10-14). The alpha and beta chains form an alternating ring which encloses part of the gamma chain. F(1) is attached to F(0) by a central stalk formed by the gamma and epsilon chains, while a peripheral stalk is formed by the delta and b chains.

The protein resides in the cell inner membrane. F(1)F(0) ATP synthase produces ATP from ADP in the presence of a proton or sodium gradient. F-type ATPases consist of two structural domains, F(1) containing the extramembraneous catalytic core and F(0) containing the membrane proton channel, linked together by a central stalk and a peripheral stalk. During catalysis, ATP synthesis in the catalytic domain of F(1) is coupled via a rotary mechanism of the central stalk subunits to proton translocation. Its function is as follows. Component of the F(0) channel, it forms part of the peripheral stalk, linking F(1) to F(0). This chain is ATP synthase subunit b, found in Solibacter usitatus (strain Ellin6076).